Here is a 687-residue protein sequence, read N- to C-terminus: MCASLNEVKKNETYGVSQKGYNDNFSESEGVLHGSKSMPTSMKNMLQSPTMVNMCDILQNKEAANDEKPVIPTTDTATAGTGTEDISSTQSEETDQNSHLIASEILEGTFKDISYKEYANFLGNDNNNQVLTEFVKLLSPLPSSLLETLFNLSKSIYFIAEAQNIDRILECLSKEWIACHPNTHWKSGYKSCHIVLFSLLILNSDLHNNFQVDHKKIKFSMVAFINNTLRALREENEYEELKIYSREHLIIEELSEYYKTLNETPLPLCTESRTSINTSDNQSSLKRFSTLGSREFSTSNLRSVNSNSTTLYSRDGQVSVREMSAKSNKNFHNNHPMDALYLKESFDDGLITENGSSWFMDDLILISKKSLPRKYSKRDKDQVAAPKMTSKRNKSFFGWLKPSKTTTLIEHTSRRTSLSYLNKDSEWERVKIQVKEGRIFIFKIKPDVKDIIQSSETDSATIDYFKDISSSYFAYSLLEAEAHVVQDNIIIGSGAMKSNVCNKNTKRKSGNFTVSFPENINGPKLVLEFQTRSVEEAHKFMDCINFWAGRISPVPLTQFEAVSNAEYGWSDKILTEHASLNLKNIVVSEWKPLLGLELLYEDAKDVEMVELKERLKELMNFTRQLGIWIDKHNEIKDKLVEIWSFDDNYFEAVMNNWNSRYLYMNNQYKKRLSYLKALQKAMGSVQF.

Residues 57–264 (ILQNKEAAND…SEYYKTLNET (208 aa)) enclose the SEC7 domain. The interval 63–97 (AANDEKPVIPTTDTATAGTGTEDISSTQSEETDQN) is disordered. Residues 73-83 (TTDTATAGTGT) show a composition bias toward low complexity. Thr-290 carries the phosphothreonine modification. Ser-293 and Ser-299 each carry phosphoserine. The region spanning 412–551 (TSRRTSLSYL…DCINFWAGRI (140 aa)) is the PH domain.

Belongs to the YEL1 family.

Its subcellular location is the cytoplasm. The protein localises to the cell membrane. It is found in the bud neck. The protein resides in the bud tip. Its function is as follows. Guanine nucleotide exchange factor for ARF3 required for localization of ARF3 to the bud neck and tip and involved in actin patch polarization. The polypeptide is Guanine-nucleotide exchange factor YEL1 (YEL1) (Saccharomyces cerevisiae (strain JAY291) (Baker's yeast)).